Here is a 335-residue protein sequence, read N- to C-terminus: Biotin synthase (335 aa).

The disordered stretch occupies residues 1-20; sequence MVSVGTQSHSGRDQAEQNPS. The Radical SAM core domain occupies 59–284; the sequence is GHLQKSSLLS…MMPQSMVRLS (226 aa). Residues cysteine 74, cysteine 78, and cysteine 81 each contribute to the [4Fe-4S] cluster site. 4 residues coordinate [2Fe-2S] cluster: cysteine 118, cysteine 150, cysteine 210, and arginine 282.

The protein belongs to the radical SAM superfamily. Biotin synthase family. In terms of assembly, homodimer. [4Fe-4S] cluster serves as cofactor. It depends on [2Fe-2S] cluster as a cofactor.

It catalyses the reaction (4R,5S)-dethiobiotin + (sulfur carrier)-SH + 2 reduced [2Fe-2S]-[ferredoxin] + 2 S-adenosyl-L-methionine = (sulfur carrier)-H + biotin + 2 5'-deoxyadenosine + 2 L-methionine + 2 oxidized [2Fe-2S]-[ferredoxin]. The protein operates within cofactor biosynthesis; biotin biosynthesis; biotin from 7,8-diaminononanoate: step 2/2. Catalyzes the conversion of dethiobiotin (DTB) to biotin by the insertion of a sulfur atom into dethiobiotin via a radical-based mechanism. The chain is Biotin synthase from Zymomonas mobilis subsp. mobilis (strain ATCC 31821 / ZM4 / CP4).